The chain runs to 348 residues: Erythronate-4-phosphate dehydrogenase (348 aa).

Substrate contacts are provided by threonine 46 and threonine 67. Aspartate 147 is an NAD(+) binding site. Arginine 209 is an active-site residue. Position 233 (aspartate 233) interacts with NAD(+). Glutamate 238 is a catalytic residue. Histidine 255 functions as the Proton donor in the catalytic mechanism. An NAD(+)-binding site is contributed by glycine 258. A substrate-binding site is contributed by tyrosine 259.

This sequence belongs to the D-isomer specific 2-hydroxyacid dehydrogenase family. PdxB subfamily. In terms of assembly, homodimer.

The protein localises to the cytoplasm. The enzyme catalyses 4-phospho-D-erythronate + NAD(+) = (R)-3-hydroxy-2-oxo-4-phosphooxybutanoate + NADH + H(+). The protein operates within cofactor biosynthesis; pyridoxine 5'-phosphate biosynthesis; pyridoxine 5'-phosphate from D-erythrose 4-phosphate: step 2/5. Its function is as follows. Catalyzes the oxidation of erythronate-4-phosphate to 3-hydroxy-2-oxo-4-phosphonooxybutanoate. In Bacteroides fragilis (strain ATCC 25285 / DSM 2151 / CCUG 4856 / JCM 11019 / LMG 10263 / NCTC 9343 / Onslow / VPI 2553 / EN-2), this protein is Erythronate-4-phosphate dehydrogenase.